A 204-amino-acid chain; its full sequence is Large ribosomal subunit protein uL4 (204 aa).

Residues 47–69 are disordered; it reads KAQKTRAEVSGGGKKPWRQKGTG.

This sequence belongs to the universal ribosomal protein uL4 family. Part of the 50S ribosomal subunit.

Its function is as follows. One of the primary rRNA binding proteins, this protein initially binds near the 5'-end of the 23S rRNA. It is important during the early stages of 50S assembly. It makes multiple contacts with different domains of the 23S rRNA in the assembled 50S subunit and ribosome. Functionally, forms part of the polypeptide exit tunnel. The chain is Large ribosomal subunit protein uL4 from Cellvibrio japonicus (strain Ueda107) (Pseudomonas fluorescens subsp. cellulosa).